We begin with the raw amino-acid sequence, 1265 residues long: Kinesin-related protein 13 (1265 aa).

The Kinesin motor domain maps to 23-350; that stretch reads NIQAFVRVRP…LEYALKAKNI (328 aa). 106–113 contacts ATP; sequence GQTGTGKT. Positions 331-459 form a coiled coil; it reads LVNLEETINT…KQQQEKQKFI (129 aa). Disordered stretches follow at residues 918–1026, 1085–1119, 1127–1146, 1158–1214, and 1245–1265; these read KSGE…QPLI, SLVN…LSQL, LQPQ…LNGS, LLDD…NQSL, and FGGG…TPLK. Low complexity predominate over residues 930–951; it reads IPSPISTSSSSSSSSSISSIHS. Composition is skewed to polar residues over residues 960-980, 1003-1026, and 1085-1097; these read HQSI…SINC, LNLN…QPLI, and SLVN…SPKL. 2 stretches are compositionally biased toward low complexity: residues 1100 to 1119 and 1128 to 1146; these read QKIL…LSQL and QPQQ…LNGS. Residues 1158-1169 show a composition bias toward acidic residues; that stretch reads LLDDDSDSDNSD. Over residues 1174 to 1195 the composition is skewed to low complexity; sequence SLLSSNKKSSRASKNAVVSKKV. Residues 1250-1265 are compositionally biased toward polar residues; it reads TISSKLKSLKQQTPLK.

The protein belongs to the TRAFAC class myosin-kinesin ATPase superfamily. Kinesin family. BimC subfamily.

The protein localises to the cytoplasm. Its subcellular location is the cytoskeleton. Microtubule-associated force-producing protein that plays a role in organelle transport. Its motor activity is directed toward the microtubule's plus end. Cooperates with dynein to control the spindle elongation rate, but is dispensable for mitosis. In Dictyostelium discoideum (Social amoeba), this protein is Kinesin-related protein 13 (kif13).